Consider the following 118-residue polypeptide: Small ribosomal subunit protein uS13 (118 aa).

The disordered stretch occupies residues 94 to 118 (SLPVRGQRTKTNARTRKGPRKAIKK).

It belongs to the universal ribosomal protein uS13 family. As to quaternary structure, part of the 30S ribosomal subunit. Forms a loose heterodimer with protein S19. Forms two bridges to the 50S subunit in the 70S ribosome.

In terms of biological role, located at the top of the head of the 30S subunit, it contacts several helices of the 16S rRNA. In the 70S ribosome it contacts the 23S rRNA (bridge B1a) and protein L5 of the 50S subunit (bridge B1b), connecting the 2 subunits; these bridges are implicated in subunit movement. Contacts the tRNAs in the A and P-sites. The polypeptide is Small ribosomal subunit protein uS13 (Aeromonas hydrophila subsp. hydrophila (strain ATCC 7966 / DSM 30187 / BCRC 13018 / CCUG 14551 / JCM 1027 / KCTC 2358 / NCIMB 9240 / NCTC 8049)).